The sequence spans 404 residues: Glucose-1-phosphate adenylyltransferase 2 (404 aa).

Alpha-D-glucose 1-phosphate-binding positions include Tyr-97, Gly-162, Glu-177–Lys-178, and Ser-195.

Belongs to the bacterial/plant glucose-1-phosphate adenylyltransferase family. Homotetramer.

It carries out the reaction alpha-D-glucose 1-phosphate + ATP + H(+) = ADP-alpha-D-glucose + diphosphate. It functions in the pathway glycan biosynthesis; glycogen biosynthesis. Its function is as follows. Involved in the biosynthesis of ADP-glucose, a building block required for the elongation reactions to produce glycogen. Catalyzes the reaction between ATP and alpha-D-glucose 1-phosphate (G1P) to produce pyrophosphate and ADP-Glc. This chain is Glucose-1-phosphate adenylyltransferase 2, found in Vibrio parahaemolyticus serotype O3:K6 (strain RIMD 2210633).